Consider the following 639-residue polypeptide: MNDRPPTPLLDTVSTPEDLRRLKPADLRQLADELRAEMISAVSVTGGHLGAGLGVVELTVALHYVFDTPRDVLIWDVGHQAYPHKILTGRRDRIRTLRQGGGLSGFTKRSESEYDPFGAAHSSTSISAALGFAVANKLANKEGRAIAVIGDGAMSAGMAYEAMNNAKQAGNRLIVILNDNDMSIAPPVGALSAYLAKIVSSRPFLSMRGFAKRVAQKLPRPIHDFAKRSEEYARGMATGGTLFEELGFYYVGPVDGHNLDHLLPILENVRDGDHGPILIHVVTNKGKGYAPAEAAADKYHGVQKFDVVSGVQAKAPPGPPSYTGVFADALVAEAKRDDRICAITAAMPSGTGLDKFGKAFPERSFDVGIAEQHAVTFAAGLAAQGYRPFCAIYSTFLQRAYDQVVHDVAIQNLPVRFAIDRAGLVGADGSTHAGSFDITYLATLPNMVVMAAADEAELVHMVHTAAVHDSGPIALRYPRGNGVGVALPAAPERLAIGKGRIVREGKTVALLSLGTRLGEALRAADQLDALGLSTTVADLRFAKPLDEAMIQTLLTSHEVAVTIEEGAIGGLGAHVLTLASDLGLIDGGLKLRTMRLPDAFQEHDKPEKQYAEAGLDAESIVATVLAALHRNSKGLEESA.

Residues His-79 and 120 to 122 (AHS) each bind thiamine diphosphate. Asp-151 contributes to the Mg(2+) binding site. Thiamine diphosphate-binding positions include 152–153 (GA), Asn-180, Tyr-289, and Glu-371. Asn-180 is a Mg(2+) binding site.

The protein belongs to the transketolase family. DXPS subfamily. As to quaternary structure, homodimer. Mg(2+) serves as cofactor. Thiamine diphosphate is required as a cofactor.

The catalysed reaction is D-glyceraldehyde 3-phosphate + pyruvate + H(+) = 1-deoxy-D-xylulose 5-phosphate + CO2. It participates in metabolic intermediate biosynthesis; 1-deoxy-D-xylulose 5-phosphate biosynthesis; 1-deoxy-D-xylulose 5-phosphate from D-glyceraldehyde 3-phosphate and pyruvate: step 1/1. In terms of biological role, catalyzes the acyloin condensation reaction between C atoms 2 and 3 of pyruvate and glyceraldehyde 3-phosphate to yield 1-deoxy-D-xylulose-5-phosphate (DXP). The chain is 1-deoxy-D-xylulose-5-phosphate synthase from Rhizorhabdus wittichii (strain DSM 6014 / CCUG 31198 / JCM 15750 / NBRC 105917 / EY 4224 / RW1) (Sphingomonas wittichii).